The sequence spans 694 residues: MSTPFGLDFGNDNSVLAVARNRGIDIVVNEVSNRSTPSMVGFGQKNRFLGESAKTKQTSNIKNTVGNLKRILGLDYDHPDFQEESKFFTSKLVKLEDGKIGTQVRFAGESTTFSATQLNAMFINKVKQTVETETKANITDVCIAVPTWYTEEQRYAAADAARIAGLNPVRIVNDITAAGVSYGVFKTDLPEGEEKPRIVAFIDIGHSSYTCSIMAFKKGELKVLGTAWDKNFGGRNFDRAITEHFADEFKTKYKIDIRENPKAYNRVMTSAERLKKVLSANTAAPFSVENVMNDVDASSQLSREELEELVKPMLERVTEPVTKALAQAGLTKDDVDFVEIIGGTTRIPTLKNSISEAFGKPLSTTLNQDEAIAKGAAFICAIHSPTLRVRPFKFEDIHQFSVSYKWDKQVEDEDHLEVFPANSNFPSTKLITLHRSGDFSMEANYTNKEELPPHLDANIAKWDITGVQIPEGETSVPVKLKLRCDPSGLHIIEEAYSLEDIVVKEEVPLPEDAPEDAVPEVKEVTKTVKKDTLEITAHTFTLADDKLNTLIEKENDMTAQDRLVAETEDRKNNLEEYIYTLRGKLDEEYSDFASDAEKTKLKDMLAKAEEWLYEDGFDTIKAKYIAKYEELAAIGNVIRGRYLAKEEEKKQALRAKQEAANLAALSEKLAAQRSADSEAKKDATPEGDAQMDLD.

The interval 671–694 is disordered; it reads AQRSADSEAKKDATPEGDAQMDLD. The segment covering 675–684 has biased composition (basic and acidic residues); that stretch reads ADSEAKKDAT.

Belongs to the heat shock protein 70 family.

It is found in the cytoplasm. This is Heat shock protein homolog SSE1 (SSE1) from Candida glabrata (strain ATCC 2001 / BCRC 20586 / JCM 3761 / NBRC 0622 / NRRL Y-65 / CBS 138) (Yeast).